A 370-amino-acid chain; its full sequence is MHRLIFVCTLVCANFCSCRDTSATPQSASIKALRNANLRRDESNHLTDLYRRDETIQVRGNGYVQSPRFPNSYPRNLLLTWRLHSQENTRIQLVFDNQFGLEEAENDICRYDFVEVEDISETSTIIRGRWCGHKEVPPRIKSRTNQIKITFKSDDYFVAKPGFKIYYSLLEDFQPAAASETNWESVTSSISGVSYNSPSVTDPTLIADALDKKIAEFDTVEDLLKYFNPESWQEDLENMYLDTPRYRGRSYHDRKSKVDLDRLNDDAKRYSCTPRNYSVNIREELKLANVVFFPRCLLVQRCGGNCGCGTVNWRSCTCNSGKTVKKYHEVLQFEPGHIKRRGRAKTMALVDIQLDHHERCDCICSSRPPR.

A signal peptide spans 1-18; that stretch reads MHRLIFVCTLVCANFCSC. The CUB domain maps to 52–170; that stretch reads RDETIQVRGN…PGFKIYYSLL (119 aa). A disulfide bridge links Cys109 with Cys131. N-linked (GlcNAc...) asparagine glycosylation occurs at Asn276. 2 cysteine pairs are disulfide-bonded: Cys302/Cys360 and Cys306/Cys362.

It belongs to the PDGF/VEGF growth factor family. In terms of assembly, homodimer; disulfide-linked. Interacts with PDGFRB homodimers, and with heterodimers formed by PDGFRA and PDGFRB. Post-translationally, activated by proteolytic cleavage. Proteolytic removal of the N-terminal CUB domain releasing the core domain is necessary for unmasking the receptor-binding epitopes of the core domain. Cleavage after Arg-247 or Arg-249 by urokinase plasminogen activator gives rise to the active form.

Its subcellular location is the secreted. Growth factor that plays an essential role in the regulation of embryonic development, cell proliferation, cell migration, survival and chemotaxis. Potent mitogen for cells of mesenchymal origin. Plays an important role in wound healing. Induces macrophage recruitment, increased interstitial pressure, and blood vessel maturation during angiogenesis. Can initiate events that lead to a mesangial proliferative glomerulonephritis, including influx of monocytes and macrophages and production of extracellular matrix. The chain is Platelet-derived growth factor D (PDGFD) from Pongo abelii (Sumatran orangutan).